The primary structure comprises 257 residues: Imidazole glycerol phosphate synthase subunit HisF (257 aa).

Catalysis depends on residues D11 and D130.

Belongs to the HisA/HisF family. Heterodimer of HisH and HisF.

It localises to the cytoplasm. The catalysed reaction is 5-[(5-phospho-1-deoxy-D-ribulos-1-ylimino)methylamino]-1-(5-phospho-beta-D-ribosyl)imidazole-4-carboxamide + L-glutamine = D-erythro-1-(imidazol-4-yl)glycerol 3-phosphate + 5-amino-1-(5-phospho-beta-D-ribosyl)imidazole-4-carboxamide + L-glutamate + H(+). The protein operates within amino-acid biosynthesis; L-histidine biosynthesis; L-histidine from 5-phospho-alpha-D-ribose 1-diphosphate: step 5/9. Functionally, IGPS catalyzes the conversion of PRFAR and glutamine to IGP, AICAR and glutamate. The HisF subunit catalyzes the cyclization activity that produces IGP and AICAR from PRFAR using the ammonia provided by the HisH subunit. The sequence is that of Imidazole glycerol phosphate synthase subunit HisF from Shewanella sp. (strain MR-7).